Reading from the N-terminus, the 362-residue chain is Peptide chain release factor 1 (362 aa).

At glutamine 237 the chain carries N5-methylglutamine.

It belongs to the prokaryotic/mitochondrial release factor family. Post-translationally, methylated by PrmC. Methylation increases the termination efficiency of RF1.

It is found in the cytoplasm. In terms of biological role, peptide chain release factor 1 directs the termination of translation in response to the peptide chain termination codons UAG and UAA. The polypeptide is Peptide chain release factor 1 (Aeromonas salmonicida (strain A449)).